Consider the following 651-residue polypeptide: Chaperone protein HtpG (651 aa).

Residues 1 to 353 (MAAHVEQLEF…AQDMSLNVSR (353 aa)) are a; substrate-binding. A b region spans residues 354-569 (EILQQDRQIR…TFGITPALAR (216 aa)). The interval 570 to 651 (MYRASGQPVP…RLTRTVGDQT (82 aa)) is c.

It belongs to the heat shock protein 90 family. In terms of assembly, homodimer.

Its subcellular location is the cytoplasm. Its function is as follows. Molecular chaperone. Has ATPase activity. The chain is Chaperone protein HtpG from Mycolicibacterium vanbaalenii (strain DSM 7251 / JCM 13017 / BCRC 16820 / KCTC 9966 / NRRL B-24157 / PYR-1) (Mycobacterium vanbaalenii).